The following is a 100-amino-acid chain: Large ribosomal subunit protein uL23 (100 aa).

Belongs to the universal ribosomal protein uL23 family. As to quaternary structure, part of the 50S ribosomal subunit. Contacts protein L29, and trigger factor when it is bound to the ribosome.

Functionally, one of the early assembly proteins it binds 23S rRNA. One of the proteins that surrounds the polypeptide exit tunnel on the outside of the ribosome. Forms the main docking site for trigger factor binding to the ribosome. The protein is Large ribosomal subunit protein uL23 of Mycobacterium ulcerans (strain Agy99).